A 118-amino-acid polypeptide reads, in one-letter code: Large ribosomal subunit protein uL18 (118 aa).

This sequence belongs to the universal ribosomal protein uL18 family. In terms of assembly, part of the 50S ribosomal subunit; part of the 5S rRNA/L5/L18/L25 subcomplex. Contacts the 5S and 23S rRNAs.

This is one of the proteins that bind and probably mediate the attachment of the 5S RNA into the large ribosomal subunit, where it forms part of the central protuberance. This chain is Large ribosomal subunit protein uL18, found in Nitrosospira multiformis (strain ATCC 25196 / NCIMB 11849 / C 71).